The sequence spans 245 residues: MSQSTSVLRRNGFTFKQFFVAHDRCAMKVGTDGILLGAWAPVAGVKRCLDIGAGSGLLALMLAQRTSDSVIIDAVELESEAAAQAQENINQSPWAERINVHTADIQQWITQQTVRFDLIISNPPYYQQGVECATPQREQARYTTTLDHPSLLTCAAECITEEGFFCVVLPEQIGNGFTELALSMGWHLRLRTDVAENEARLPHRVLLAFSPQAGECFSDRLVIRGPDQNYSEAYTALTQAFYLFM.

It belongs to the methyltransferase superfamily. tRNA (adenine-N(6)-)-methyltransferase family.

It localises to the cytoplasm. The catalysed reaction is adenosine(37) in tRNA1(Val) + S-adenosyl-L-methionine = N(6)-methyladenosine(37) in tRNA1(Val) + S-adenosyl-L-homocysteine + H(+). Functionally, specifically methylates the adenine in position 37 of tRNA(1)(Val) (anticodon cmo5UAC). This chain is tRNA1(Val) (adenine(37)-N6)-methyltransferase, found in Escherichia coli (strain SE11).